The following is a 138-amino-acid chain: NADH-quinone oxidoreductase subunit A (138 aa).

3 consecutive transmembrane segments (helical) span residues F8 to T28, F63 to W83, and F93 to W113.

This sequence belongs to the complex I subunit 3 family. NDH-1 is composed of 14 different subunits. Subunits NuoA, H, J, K, L, M, N constitute the membrane sector of the complex.

The protein resides in the cell inner membrane. The catalysed reaction is a quinone + NADH + 5 H(+)(in) = a quinol + NAD(+) + 4 H(+)(out). NDH-1 shuttles electrons from NADH, via FMN and iron-sulfur (Fe-S) centers, to quinones in the respiratory chain. The immediate electron acceptor for the enzyme in this species is believed to be a menaquinone. Couples the redox reaction to proton translocation (for every two electrons transferred, four hydrogen ions are translocated across the cytoplasmic membrane), and thus conserves the redox energy in a proton gradient. The protein is NADH-quinone oxidoreductase subunit A of Prosthecochloris aestuarii (strain DSM 271 / SK 413).